Reading from the N-terminus, the 474-residue chain is Methylenetetrahydrofolate--tRNA-(uracil-5-)-methyltransferase TrmFO (474 aa).

14-19 (GGGLAG) contacts FAD.

It belongs to the MnmG family. TrmFO subfamily. FAD is required as a cofactor.

It localises to the cytoplasm. It catalyses the reaction uridine(54) in tRNA + (6R)-5,10-methylene-5,6,7,8-tetrahydrofolate + NADH + H(+) = 5-methyluridine(54) in tRNA + (6S)-5,6,7,8-tetrahydrofolate + NAD(+). The enzyme catalyses uridine(54) in tRNA + (6R)-5,10-methylene-5,6,7,8-tetrahydrofolate + NADPH + H(+) = 5-methyluridine(54) in tRNA + (6S)-5,6,7,8-tetrahydrofolate + NADP(+). Catalyzes the folate-dependent formation of 5-methyl-uridine at position 54 (M-5-U54) in all tRNAs. This is Methylenetetrahydrofolate--tRNA-(uracil-5-)-methyltransferase TrmFO from Caulobacter vibrioides (strain ATCC 19089 / CIP 103742 / CB 15) (Caulobacter crescentus).